A 578-amino-acid polypeptide reads, in one-letter code: Sulfite reductase [NADPH] hemoprotein beta-component (578 aa).

Residues 1–11 (MSANQQSNSQE) show a composition bias toward polar residues. The segment at 1 to 20 (MSANQQSNSQEVLGEVLGPL) is disordered. Positions 441, 447, 487, and 491 each coordinate [4Fe-4S] cluster. Cys491 provides a ligand contact to siroheme.

The protein belongs to the nitrite and sulfite reductase 4Fe-4S domain family. As to quaternary structure, alpha(8)-beta(8). The alpha component is a flavoprotein, the beta component is a hemoprotein. Requires siroheme as cofactor. The cofactor is [4Fe-4S] cluster.

The catalysed reaction is hydrogen sulfide + 3 NADP(+) + 3 H2O = sulfite + 3 NADPH + 4 H(+). The protein operates within sulfur metabolism; hydrogen sulfide biosynthesis; hydrogen sulfide from sulfite (NADPH route): step 1/1. In terms of biological role, component of the sulfite reductase complex that catalyzes the 6-electron reduction of sulfite to sulfide. This is one of several activities required for the biosynthesis of L-cysteine from sulfate. This is Sulfite reductase [NADPH] hemoprotein beta-component from Vibrio campbellii (strain ATCC BAA-1116).